The sequence spans 200 residues: dTTP/UTP pyrophosphatase (200 aa).

The Proton acceptor role is filled by Asp73.

It belongs to the Maf family. YhdE subfamily. Requires a divalent metal cation as cofactor.

The protein resides in the cytoplasm. It catalyses the reaction dTTP + H2O = dTMP + diphosphate + H(+). It carries out the reaction UTP + H2O = UMP + diphosphate + H(+). Its function is as follows. Nucleoside triphosphate pyrophosphatase that hydrolyzes dTTP and UTP. May have a dual role in cell division arrest and in preventing the incorporation of modified nucleotides into cellular nucleic acids. The polypeptide is dTTP/UTP pyrophosphatase (Chromohalobacter salexigens (strain ATCC BAA-138 / DSM 3043 / CIP 106854 / NCIMB 13768 / 1H11)).